The chain runs to 921 residues: AdoMet-dependent rRNA methyltransferase SPB1 (921 aa).

5 residues coordinate S-adenosyl-L-methionine: Gly58, Trp60, Asp78, Asp94, and Asp119. Lys159 (proton acceptor) is an active-site residue. A coiled-coil region spans residues 367-414 (VEEMDEDDQIDDELARLNEEAARKARKERRRKNELRQKKILKMQLQMT). Disordered regions lie at residues 448-476 (ALIQ…DPET), 491-604 (EFKQ…KRSL), 635-713 (ELDE…GKQK), 814-835 (LEKA…EKEK), and 866-921 (RGLK…GPRN). A compositionally biased stretch (basic and acidic residues) spans 491 to 522 (EFKQKQSERDAKFRAKQARLQDAKNDSWHGIK). Composition is skewed to acidic residues over residues 523–542 (DDEE…ESEG), 555–568 (ETFD…EEDE), 635–684 (ELDE…DDFE), and 697–708 (DEEWDLNGEDEE). A coiled-coil region spans residues 796–835 (IKKVAEAKARKKMRTLRRLEKAQKKAETINENEDISEKEK). Basic and acidic residues predominate over residues 814-823 (LEKAQKKAET). A compositionally biased stretch (basic residues) spans 868–879 (LKGRPKGTKGRY). Residues 880–892 (KMVDPRMKKELRA) show a composition bias toward basic and acidic residues.

The protein belongs to the class I-like SAM-binding methyltransferase superfamily. RNA methyltransferase RlmE family. SPB1 subfamily. Component of the nucleolar and nucleoplasmic pre-60S ribosomal particle.

It is found in the nucleus. The protein localises to the nucleolus. It carries out the reaction a ribonucleotide in rRNA + S-adenosyl-L-methionine = a 2'-O-methylribonucleotide in rRNA + S-adenosyl-L-homocysteine + H(+). Functionally, required for proper assembly of pre-ribosomal particles during the biogenesis of the 60S ribosomal subunit. This Mycosarcoma maydis (Corn smut fungus) protein is AdoMet-dependent rRNA methyltransferase SPB1.